Consider the following 1435-residue polypeptide: Gag-Pol polyprotein (1435 aa).

G2 is lipidated: N-myristoyl glycine; by host. Residues 7-31 (VLSGGKLDAWEKIRLRPGGKKKYRL) are interaction with Gp41. Residues 8–43 (LSGGKLDAWEKIRLRPGGKKKYRLKHLVWASRELER) form an interaction with host CALM1 region. The tract at residues 12-19 (KLDAWEKI) is interaction with host AP3D1. The interval 14 to 33 (DAWEKIRLRPGGKKKYRLKH) is interaction with membrane phosphatidylinositol 4,5-bisphosphate and RNA. A Nuclear export signal motif is present at residues 16-22 (WEKIRLR). Residues 26 to 32 (KKKYRLK) carry the Nuclear localization signal motif. Residues 73 to 77 (EELKS) form an interaction with membrane phosphatidylinositol 4,5-bisphosphate region. Residues 108–127 (QNKSQQKTQQAAADKEKDNK) are disordered. Over residues 109–118 (NKSQQKTQQA) the composition is skewed to polar residues. Y132 is subject to Phosphotyrosine; by host. An interaction with human PPIA/CYPA and NUP153 region spans residues 189–227 (NTVGGHQAAMQMLKDTINEEAAEWDRVHPVHAGPIPPGQ). The dimerization/Multimerization of capsid protein p24 stretch occupies residues 277–363 (YSPVSILDIK…GGPSHKARVL (87 aa)). 2 CCHC-type zinc fingers span residues 391-408 (VKCFNCGKEGHIARNCRA) and 412-429 (KGCWKCGREGHQMKDCTE). The disordered stretch occupies residues 445 to 482 (EARKFSPEQARTNSPTSRELRVRRGDDPLSEAGAAEGQ). Positions 462 to 471 (RELRVRRGDD) are enriched in basic and acidic residues. Positions 489–493 (PQITL) are dimerization of protease. In terms of domain architecture, Peptidase A2 spans 508 to 577 (REALLDTGAD…TPVNIIGRNI (70 aa)). Catalysis depends on D513, which acts as the For protease activity; shared with dimeric partner. 2 dimerization of protease regions span residues 537–543 (GIGGFIK) and 576–588 (NILTQIGCTLNFP). Residues 631–821 (EGKISRIGPE…PPFLWMGYEL (191 aa)) enclose the Reverse transcriptase domain. Positions 697, 772, and 773 each coordinate Mg(2+). Residues 814 to 822 (FLWMGYELH) are RT 'primer grip'. The Tryptophan repeat motif motif lies at 985–1001 (WETWWTEYWQATWIPEW). In terms of domain architecture, RNase H type-1 spans 1021–1144 (IAGAETYYID…VDKLVSSGVR (124 aa)). Residues D1030, E1065, D1085, and D1136 each coordinate Mg(2+). The Integrase-type zinc-finger motif lies at 1150–1191 (DGIDKAQEEHERYHNNWRAVASDFNLPPIVAKEIVASCDKCQ). 4 residues coordinate Zn(2+): H1159, H1163, C1187, and C1190. In terms of domain architecture, Integrase catalytic spans 1201–1351 (VDCSPGIWQL…SAGERIIDII (151 aa)). Positions 1211, 1263, and 1299 each coordinate Mg(2+). The integrase-type DNA-binding region spans 1370–1417 (FRVYYRDSRDPIWKGPAKLLWKGEGAVVIQDNSEIKVVPRREAKIIRD).

Homotrimer; further assembles as hexamers of trimers. Interacts with gp41 (via C-terminus). Interacts with host CALM1; this interaction induces a conformational change in the Matrix protein, triggering exposure of the myristate group. Interacts with host AP3D1; this interaction allows the polyprotein trafficking to multivesicular bodies during virus assembly. Part of the pre-integration complex (PIC) which is composed of viral genome, matrix protein, Vpr and integrase. As to quaternary structure, homodimer; the homodimer further multimerizes as homohexamers or homopentamers. Interacts with human PPIA/CYPA; This interaction stabilizes the capsid. Interacts with human NUP153. Interacts with host PDZD8; this interaction stabilizes the capsid. Interacts with monkey TRIM5; this interaction destabilizes the capsid. In terms of assembly, homodimer, whose active site consists of two apposed aspartic acid residues. Heterodimer of p66 RT and p51 RT (RT p66/p51). Heterodimerization of RT is essential for DNA polymerase activity. The overall folding of the subdomains is similar in p66 RT and p51 RT but the spatial arrangements of the subdomains are dramatically different. As to quaternary structure, homodimer; possibly can form homotetramer. Part of the pre-integration complex (PIC) which is composed of viral genome, matrix protein, Vpr and integrase. Interacts with human SMARCB1/INI1 and human PSIP1/LEDGF isoform 1. Interacts with human KPNA3; this interaction might play a role in nuclear import of the pre-integration complex. Interacts with human NUP153; this interaction might play a role in nuclear import of the pre-integration complex. The cofactor is Mg(2+). Post-translationally, specific enzymatic cleavages by the viral protease yield mature proteins. The protease is released by autocatalytic cleavage. The polyprotein is cleaved during and after budding, this process is termed maturation. Proteolytic cleavage of p66 RT removes the RNase H domain to yield the p51 RT subunit. Nucleocapsid protein p7 might be further cleaved after virus entry. In terms of processing, tyrosine phosphorylated presumably in the virion by a host kinase. Phosphorylation is apparently not a major regulator of membrane association. Phosphorylated possibly by host MAPK1; this phosphorylation is necessary for Pin1-mediated virion uncoating. Post-translationally, methylated by host PRMT6, impairing its function by reducing RNA annealing and the initiation of reverse transcription.

Its subcellular location is the host cell membrane. The protein resides in the host endosome. It localises to the host multivesicular body. The protein localises to the virion membrane. It is found in the host nucleus. Its subcellular location is the host cytoplasm. The protein resides in the virion. The catalysed reaction is Specific for a P1 residue that is hydrophobic, and P1' variable, but often Pro.. The enzyme catalyses Endohydrolysis of RNA in RNA/DNA hybrids. Three different cleavage modes: 1. sequence-specific internal cleavage of RNA. Human immunodeficiency virus type 1 and Moloney murine leukemia virus enzymes prefer to cleave the RNA strand one nucleotide away from the RNA-DNA junction. 2. RNA 5'-end directed cleavage 13-19 nucleotides from the RNA end. 3. DNA 3'-end directed cleavage 15-20 nucleotides away from the primer terminus.. It catalyses the reaction 3'-end directed exonucleolytic cleavage of viral RNA-DNA hybrid.. It carries out the reaction DNA(n) + a 2'-deoxyribonucleoside 5'-triphosphate = DNA(n+1) + diphosphate. With respect to regulation, protease: The viral protease is inhibited by many synthetic protease inhibitors (PIs), such as amprenavir, atazanavir, indinavir, loprinavir, nelfinavir, ritonavir and saquinavir. Use of protease inhibitors in tritherapy regimens permit more ambitious therapeutic strategies. Reverse transcriptase/ribonuclease H: RT can be inhibited either by nucleoside RT inhibitors (NRTIs) or by non nucleoside RT inhibitors (NNRTIs). NRTIs act as chain terminators, whereas NNRTIs inhibit DNA polymerization by binding a small hydrophobic pocket near the RT active site and inducing an allosteric change in this region. Classical NRTIs are abacavir, adefovir (PMEA), didanosine (ddI), lamivudine (3TC), stavudine (d4T), tenofovir (PMPA), zalcitabine (ddC), and zidovudine (AZT). Classical NNRTIs are atevirdine (BHAP U-87201E), delavirdine, efavirenz (DMP-266), emivirine (I-EBU), and nevirapine (BI-RG-587). The tritherapies used as a basic effective treatment of AIDS associate two NRTIs and one NNRTI. Mediates, with Gag polyprotein, the essential events in virion assembly, including binding the plasma membrane, making the protein-protein interactions necessary to create spherical particles, recruiting the viral Env proteins, and packaging the genomic RNA via direct interactions with the RNA packaging sequence (Psi). Gag-Pol polyprotein may regulate its own translation, by the binding genomic RNA in the 5'-UTR. At low concentration, the polyprotein would promote translation, whereas at high concentration, the polyprotein would encapsidate genomic RNA and then shut off translation. Functionally, targets the polyprotein to the plasma membrane via a multipartite membrane-binding signal, that includes its myristoylated N-terminus. Matrix protein is part of the pre-integration complex. Implicated in the release from host cell mediated by Vpu. Binds to RNA. Its function is as follows. Forms the conical core that encapsulates the genomic RNA-nucleocapsid complex in the virion. Most core are conical, with only 7% tubular. The core is constituted by capsid protein hexamer subunits. The core is disassembled soon after virion entry. Host restriction factors such as TRIM5-alpha or TRIMCyp bind retroviral capsids and cause premature capsid disassembly, leading to blocks in reverse transcription. Capsid restriction by TRIM5 is one of the factors which restricts HIV-1 to the human species. Host PIN1 apparently facilitates the virion uncoating. On the other hand, interactions with PDZD8 or CYPA stabilize the capsid. In terms of biological role, encapsulates and protects viral dimeric unspliced genomic RNA (gRNA). Binds these RNAs through its zinc fingers. Acts as a nucleic acid chaperone which is involved in rearangement of nucleic acid secondary structure during gRNA retrotranscription. Also facilitates template switch leading to recombination. As part of the polyprotein, participates in gRNA dimerization, packaging, tRNA incorporation and virion assembly. Aspartyl protease that mediates proteolytic cleavages of Gag and Gag-Pol polyproteins during or shortly after the release of the virion from the plasma membrane. Cleavages take place as an ordered, step-wise cascade to yield mature proteins. This process is called maturation. Displays maximal activity during the budding process just prior to particle release from the cell. Also cleaves Nef and Vif, probably concomitantly with viral structural proteins on maturation of virus particles. Hydrolyzes host EIF4GI and PABP1 in order to shut off the capped cellular mRNA translation. The resulting inhibition of cellular protein synthesis serves to ensure maximal viral gene expression and to evade host immune response. Also mediates cleavage of host YTHDF3. Mediates cleavage of host CARD8, thereby activating the CARD8 inflammasome, leading to the clearance of latent HIV-1 in patient CD4(+) T-cells after viral reactivation; in contrast, HIV-1 can evade CARD8-sensing when its protease remains inactive in infected cells prior to viral budding. Functionally, multifunctional enzyme that converts the viral RNA genome into dsDNA in the cytoplasm, shortly after virus entry into the cell. This enzyme displays a DNA polymerase activity that can copy either DNA or RNA templates, and a ribonuclease H (RNase H) activity that cleaves the RNA strand of RNA-DNA heteroduplexes in a partially processive 3' to 5' endonucleasic mode. Conversion of viral genomic RNA into dsDNA requires many steps. A tRNA(3)-Lys binds to the primer-binding site (PBS) situated at the 5'-end of the viral RNA. RT uses the 3' end of the tRNA primer to perform a short round of RNA-dependent minus-strand DNA synthesis. The reading proceeds through the U5 region and ends after the repeated (R) region which is present at both ends of viral RNA. The portion of the RNA-DNA heteroduplex is digested by the RNase H, resulting in a ssDNA product attached to the tRNA primer. This ssDNA/tRNA hybridizes with the identical R region situated at the 3' end of viral RNA. This template exchange, known as minus-strand DNA strong stop transfer, can be either intra- or intermolecular. RT uses the 3' end of this newly synthesized short ssDNA to perform the RNA-dependent minus-strand DNA synthesis of the whole template. RNase H digests the RNA template except for two polypurine tracts (PPTs) situated at the 5'-end and near the center of the genome. It is not clear if both polymerase and RNase H activities are simultaneous. RNase H probably can proceed both in a polymerase-dependent (RNA cut into small fragments by the same RT performing DNA synthesis) and a polymerase-independent mode (cleavage of remaining RNA fragments by free RTs). Secondly, RT performs DNA-directed plus-strand DNA synthesis using the PPTs that have not been removed by RNase H as primers. PPTs and tRNA primers are then removed by RNase H. The 3' and 5' ssDNA PBS regions hybridize to form a circular dsDNA intermediate. Strand displacement synthesis by RT to the PBS and PPT ends produces a blunt ended, linear dsDNA copy of the viral genome that includes long terminal repeats (LTRs) at both ends. Its function is as follows. Catalyzes viral DNA integration into the host chromosome, by performing a series of DNA cutting and joining reactions. This enzyme activity takes place after virion entry into a cell and reverse transcription of the RNA genome in dsDNA. The first step in the integration process is 3' processing. This step requires a complex comprising the viral genome, matrix protein, Vpr and integrase. This complex is called the pre-integration complex (PIC). The integrase protein removes 2 nucleotides from each 3' end of the viral DNA, leaving recessed CA OH's at the 3' ends. In the second step, the PIC enters cell nucleus. This process is mediated through integrase and Vpr proteins, and allows the virus to infect a non dividing cell. This ability to enter the nucleus is specific of lentiviruses, other retroviruses cannot and rely on cell division to access cell chromosomes. In the third step, termed strand transfer, the integrase protein joins the previously processed 3' ends to the 5' ends of strands of target cellular DNA at the site of integration. The 5'-ends are produced by integrase-catalyzed staggered cuts, 5 bp apart. A Y-shaped, gapped, recombination intermediate results, with the 5'-ends of the viral DNA strands and the 3' ends of target DNA strands remaining unjoined, flanking a gap of 5 bp. The last step is viral DNA integration into host chromosome. This involves host DNA repair synthesis in which the 5 bp gaps between the unjoined strands are filled in and then ligated. Since this process occurs at both cuts flanking the HIV genome, a 5 bp duplication of host DNA is produced at the ends of HIV-1 integration. Alternatively, Integrase may catalyze the excision of viral DNA just after strand transfer, this is termed disintegration. The protein is Gag-Pol polyprotein (gag-pol) of Homo sapiens (Human).